A 101-amino-acid chain; its full sequence is Ascorbate-specific PTS system EIIB component (101 aa).

The region spanning Val-3–Phe-96 is the PTS EIIB type-2 domain. Cys-9 functions as the Phosphocysteine intermediate in the catalytic mechanism. The residue at position 9 (Cys-9) is a Phosphocysteine.

It localises to the cytoplasm. It carries out the reaction N(pros)-phospho-L-histidyl-[protein] + L-ascorbate(out) = L-ascorbate 6-phosphate(in) + L-histidyl-[protein]. Its function is as follows. The phosphoenolpyruvate-dependent sugar phosphotransferase system (sugar PTS), a major carbohydrate active transport system, catalyzes the phosphorylation of incoming sugar substrates concomitantly with their translocation across the cell membrane. The enzyme II UlaABC PTS system is involved in ascorbate transport. The sequence is that of Ascorbate-specific PTS system EIIB component (ulaB) from Salmonella choleraesuis (strain SC-B67).